A 279-amino-acid polypeptide reads, in one-letter code: Putative hydro-lyase GDI0188/Gdia_2258 (279 aa).

It belongs to the D-glutamate cyclase family.

This is Putative hydro-lyase GDI0188/Gdia_2258 from Gluconacetobacter diazotrophicus (strain ATCC 49037 / DSM 5601 / CCUG 37298 / CIP 103539 / LMG 7603 / PAl5).